Reading from the N-terminus, the 316-residue chain is Ribosomal RNA small subunit methyltransferase H (316 aa).

S-adenosyl-L-methionine-binding positions include Gly35 to His37, Asp55, Tyr79, Asp100, and Gln107.

This sequence belongs to the methyltransferase superfamily. RsmH family.

It is found in the cytoplasm. It catalyses the reaction cytidine(1402) in 16S rRNA + S-adenosyl-L-methionine = N(4)-methylcytidine(1402) in 16S rRNA + S-adenosyl-L-homocysteine + H(+). Functionally, specifically methylates the N4 position of cytidine in position 1402 (C1402) of 16S rRNA. This is Ribosomal RNA small subunit methyltransferase H from Nitrosospira multiformis (strain ATCC 25196 / NCIMB 11849 / C 71).